A 377-amino-acid polypeptide reads, in one-letter code: RING finger protein 215 (377 aa).

At 1-22 the chain is on the cytoplasmic side; sequence MGPAARPALRSPPPPPPPPPSP. The disordered stretch occupies residues 1–22; it reads MGPAARPALRSPPPPPPPPPSP. Pro residues predominate over residues 10–22; the sequence is RSPPPPPPPPPSP. The chain crosses the membrane as a helical span at residues 23 to 43; it reads LLLLLPLLPLWLGLAGPGAAA. Residues 44–250 are Extracellular-facing; the sequence is DGSEPAAGAG…GGSRAQEQKP (207 aa). The N-linked (GlcNAc...) asparagine glycan is linked to Asn186. A helical transmembrane segment spans residues 251–271; it reads LQQLWNAILLVAMLLCTGLVV. Topologically, residues 272–377 are cytoplasmic; sequence QAQRQASRQS…NVLGNRYSDD (106 aa). The segment at 325–366 adopts an RING-type; atypical zinc-finger fold; it reads CAVCLDYFCNKQWLRVLPCKHEFHRDCVDPWLMLQQTCPLCK.

The protein localises to the membrane. The polypeptide is RING finger protein 215 (RNF215) (Homo sapiens (Human)).